The sequence spans 68 residues: Cytochrome c3 (68 aa).

12 residues coordinate heme: H17, H20, C26, C29, H30, H45, C49, C52, H53, C62, C65, and H66.

In terms of processing, binds 3 heme groups per subunit.

Participates in sulfate respiration coupled with phosphorylation by transferring electrons from the enzyme dehydrogenase to ferredoxin. This is Cytochrome c3 (cyd) from Desulfuromonas acetoxidans (Chloropseudomonas ethylica).